Reading from the N-terminus, the 102-residue chain is NADH-quinone oxidoreductase subunit K (102 aa).

3 helical membrane-spanning segments follow: residues Ile-5–Leu-25, Ile-31–Phe-51, and Phe-66–Phe-86.

Belongs to the complex I subunit 4L family. NDH-1 is composed of 14 different subunits. Subunits NuoA, H, J, K, L, M, N constitute the membrane sector of the complex.

Its subcellular location is the cell inner membrane. It carries out the reaction a quinone + NADH + 5 H(+)(in) = a quinol + NAD(+) + 4 H(+)(out). In terms of biological role, NDH-1 shuttles electrons from NADH, via FMN and iron-sulfur (Fe-S) centers, to quinones in the respiratory chain. The immediate electron acceptor for the enzyme in this species is believed to be ubiquinone. Couples the redox reaction to proton translocation (for every two electrons transferred, four hydrogen ions are translocated across the cytoplasmic membrane), and thus conserves the redox energy in a proton gradient. This is NADH-quinone oxidoreductase subunit K from Bartonella henselae (strain ATCC 49882 / DSM 28221 / CCUG 30454 / Houston 1) (Rochalimaea henselae).